The sequence spans 197 residues: Imidazoleglycerol-phosphate dehydratase (197 aa).

This sequence belongs to the imidazoleglycerol-phosphate dehydratase family.

It localises to the cytoplasm. The enzyme catalyses D-erythro-1-(imidazol-4-yl)glycerol 3-phosphate = 3-(imidazol-4-yl)-2-oxopropyl phosphate + H2O. It functions in the pathway amino-acid biosynthesis; L-histidine biosynthesis; L-histidine from 5-phospho-alpha-D-ribose 1-diphosphate: step 6/9. The polypeptide is Imidazoleglycerol-phosphate dehydratase (Teredinibacter turnerae (strain ATCC 39867 / T7901)).